The following is a 277-amino-acid chain: Shikimate dehydrogenase (NADP(+)) (277 aa).

Residues 15–17 (SKS) and threonine 64 each bind shikimate. Lysine 68 functions as the Proton acceptor in the catalytic mechanism. The shikimate site is built by asparagine 89 and aspartate 104. Residues 129-133 (GAGGA), 153-158 (NRTAKR), and methionine 217 contribute to the NADP(+) site. Residue tyrosine 219 coordinates shikimate. Glycine 242 serves as a coordination point for NADP(+).

This sequence belongs to the shikimate dehydrogenase family. As to quaternary structure, homodimer.

It carries out the reaction shikimate + NADP(+) = 3-dehydroshikimate + NADPH + H(+). Its pathway is metabolic intermediate biosynthesis; chorismate biosynthesis; chorismate from D-erythrose 4-phosphate and phosphoenolpyruvate: step 4/7. In terms of biological role, involved in the biosynthesis of the chorismate, which leads to the biosynthesis of aromatic amino acids. Catalyzes the reversible NADPH linked reduction of 3-dehydroshikimate (DHSA) to yield shikimate (SA). This is Shikimate dehydrogenase (NADP(+)) from Hydrogenovibrio crunogenus (strain DSM 25203 / XCL-2) (Thiomicrospira crunogena).